Consider the following 434-residue polypeptide: Eukaryotic peptide chain release factor subunit 1-2 (434 aa).

Ala2 carries the post-translational modification N-acetylalanine.

The protein belongs to the eukaryotic release factor 1 family. In terms of assembly, heterodimer of two subunits, one of which binds GTP.

The protein resides in the cytoplasm. Functionally, directs the termination of nascent peptide synthesis (translation) in response to the termination codons UAA, UAG and UGA. Modulates plant growth and development. This is Eukaryotic peptide chain release factor subunit 1-2 from Arabidopsis thaliana (Mouse-ear cress).